We begin with the raw amino-acid sequence, 253 residues long: Spermatogenesis-associated protein 9 (253 aa).

The helical transmembrane segment at 144-166 threads the bilayer; it reads LTSIMCASYAALIYLTVCVNAVL. Residues 210–228 show a composition bias toward basic and acidic residues; it reads AKPYRSLPEKPDSISDRPK. The disordered stretch occupies residues 210-231; it reads AKPYRSLPEKPDSISDRPKLPA.

The protein resides in the membrane. Its function is as follows. May play at role in testicular development/spermatogenesis and may be an important factor in male infertility. This is Spermatogenesis-associated protein 9 (SPATA9) from Bos taurus (Bovine).